Consider the following 765-residue polypeptide: Phosphoribosylformylglycinamidine synthase subunit PurL (765 aa).

Residue His-59 is part of the active site. ATP is bound by residues Tyr-62 and Lys-104. Mg(2+) is bound at residue Glu-106. Substrate-binding positions include 107 to 110 and Arg-129; that span reads SHNH. The active-site Proton acceptor is the His-108. Residue Asp-130 coordinates Mg(2+). Residue Gln-254 coordinates substrate. Asp-282 is a Mg(2+) binding site. 326–328 is a substrate binding site; it reads ESQ. ATP-binding residues include Asn-522 and Gly-559. A Mg(2+)-binding site is contributed by Asn-560. Position 562 (Ser-562) interacts with substrate.

It belongs to the FGAMS family. In terms of assembly, monomer. Part of the FGAM synthase complex composed of 1 PurL, 1 PurQ and 2 PurS subunits.

It localises to the cytoplasm. It carries out the reaction N(2)-formyl-N(1)-(5-phospho-beta-D-ribosyl)glycinamide + L-glutamine + ATP + H2O = 2-formamido-N(1)-(5-O-phospho-beta-D-ribosyl)acetamidine + L-glutamate + ADP + phosphate + H(+). It participates in purine metabolism; IMP biosynthesis via de novo pathway; 5-amino-1-(5-phospho-D-ribosyl)imidazole from N(2)-formyl-N(1)-(5-phospho-D-ribosyl)glycinamide: step 1/2. Part of the phosphoribosylformylglycinamidine synthase complex involved in the purines biosynthetic pathway. Catalyzes the ATP-dependent conversion of formylglycinamide ribonucleotide (FGAR) and glutamine to yield formylglycinamidine ribonucleotide (FGAM) and glutamate. The FGAM synthase complex is composed of three subunits. PurQ produces an ammonia molecule by converting glutamine to glutamate. PurL transfers the ammonia molecule to FGAR to form FGAM in an ATP-dependent manner. PurS interacts with PurQ and PurL and is thought to assist in the transfer of the ammonia molecule from PurQ to PurL. The chain is Phosphoribosylformylglycinamidine synthase subunit PurL from Thermobifida fusca (strain YX).